The chain runs to 161 residues: 6,7-dimethyl-8-ribityllumazine synthase (161 aa).

5-amino-6-(D-ribitylamino)uracil is bound by residues F23, 61-63 (SFE), and 85-87 (AVI). 90–91 (DT) is a binding site for (2S)-2-hydroxy-3-oxobutyl phosphate. H93 functions as the Proton donor in the catalytic mechanism. F118 is a binding site for 5-amino-6-(D-ribitylamino)uracil. (2S)-2-hydroxy-3-oxobutyl phosphate is bound at residue R132.

This sequence belongs to the DMRL synthase family.

The enzyme catalyses (2S)-2-hydroxy-3-oxobutyl phosphate + 5-amino-6-(D-ribitylamino)uracil = 6,7-dimethyl-8-(1-D-ribityl)lumazine + phosphate + 2 H2O + H(+). The protein operates within cofactor biosynthesis; riboflavin biosynthesis; riboflavin from 2-hydroxy-3-oxobutyl phosphate and 5-amino-6-(D-ribitylamino)uracil: step 1/2. Catalyzes the formation of 6,7-dimethyl-8-ribityllumazine by condensation of 5-amino-6-(D-ribitylamino)uracil with 3,4-dihydroxy-2-butanone 4-phosphate. This is the penultimate step in the biosynthesis of riboflavin. The chain is 6,7-dimethyl-8-ribityllumazine synthase from Synechococcus sp. (strain WH7803).